Reading from the N-terminus, the 646-residue chain is Protein kinase YegI (646 aa).

The Protein kinase domain occupies 13–300 (VTPGRELGKG…KAWVAALDLL (288 aa)). ATP is bound by residues 19–27 (LGKGGEGAV) and Lys39. Asp141 acts as the Proton acceptor in catalysis.

Post-translationally, autophosphorylated.

Functionally, probable serine/threonine kinase. This chain is Protein kinase YegI (yegI), found in Escherichia coli O157:H7.